Here is a 210-residue protein sequence, read N- to C-terminus: DARARSFVARAAAEYDLPLVGNKAPDFAAEAVFDQEFINVKLSDYIGKKYVILFFYPLDFTFVCPTEITAFSDRHEEFEKINTEILGVSVDSVFSHLAWVQTERKSGGLGDLKYPLVSDVTKSISKSFGVLIPDQGIALRGLFIIDKEGVIQHSTINNLGIGRSVDETLRTLQALQYVKKPDEVCPAGWKPGEKSMKPDPKGSKEYFAAI.

The transit peptide at 1–10 directs the protein to the chloroplast; it reads DARARSFVAR. The Thioredoxin domain occupies 18-177; that stretch reads PLVGNKAPDF…TLRTLQALQY (160 aa). The active-site Cysteine sulfenic acid (-SOH) intermediate is C64.

It belongs to the peroxiredoxin family. AhpC/Prx1 subfamily. Homodimer; disulfide-linked, upon oxidation. As to expression, expressed in leaf blade, sheath, basiplast, stem and green spike. Maximal expression in young developing shoots segments where cell division and elongation take place. Not expressed in roots.

The protein resides in the plastid. The protein localises to the chloroplast. The catalysed reaction is a hydroperoxide + [thioredoxin]-dithiol = an alcohol + [thioredoxin]-disulfide + H2O. Thiol-specific peroxidase that catalyzes the reduction of hydrogen peroxide and organic hydroperoxides to water and alcohols, respectively. Plays a role in cell protection against oxidative stress by detoxifying peroxides. May be an antioxidant enzyme particularly in the developing shoot and photosynthesizing leaf. The sequence is that of 2-Cys peroxiredoxin BAS1, chloroplastic (BAS1) from Hordeum vulgare (Barley).